Reading from the N-terminus, the 80-residue chain is Bacteriochlorophyll c-binding protein (80 aa).

His-25 lines the a bacteriochlorophyll c pocket. The interval 49–80 is disordered; it reads PGVSRSGSGEGAFSSSPSNGFRPKRIRSRFNR. Positions 54–80 are excised as a propeptide; it reads SGSGEGAFSSSPSNGFRPKRIRSRFNR. Residues 70–80 are compositionally biased toward basic residues; that stretch reads RPKRIRSRFNR.

Belongs to the BChl C/E-binding protein family.

Its subcellular location is the chlorosome. The protein localises to the chlorosome envelope. Functionally, component of the photosynthetic apparatus. The light harvesting B740 complex binds bacteriochlorophyll c. The sequence is that of Bacteriochlorophyll c-binding protein (cmsA) from Chloroflexus aurantiacus (strain ATCC 29366 / DSM 635 / J-10-fl).